Consider the following 577-residue polypeptide: Glycine--tRNA ligase (577 aa).

Residues Arg96 and Glu161 each contribute to the substrate site. ATP-binding positions include 193–195 (RNE), 203–208 (IRLREF), 319–320 (EI), and 434–437 (GIDR). 208–212 (FSQAE) contacts substrate. 430 to 434 (EPSFG) is a substrate binding site.

Belongs to the class-II aminoacyl-tRNA synthetase family.

The protein localises to the cytoplasm. The catalysed reaction is tRNA(Gly) + glycine + ATP = glycyl-tRNA(Gly) + AMP + diphosphate. Functionally, catalyzes the attachment of glycine to tRNA(Gly). This is Glycine--tRNA ligase from Methanothrix thermoacetophila (strain DSM 6194 / JCM 14653 / NBRC 101360 / PT) (Methanosaeta thermophila).